Here is a 189-residue protein sequence, read N- to C-terminus: Large ribosomal subunit protein eL14 (189 aa).

This sequence belongs to the eukaryotic ribosomal protein eL14 family.

Component of the large ribosomal subunit. The ribosome is a large ribonucleoprotein complex responsible for the synthesis of proteins in the cell. This chain is Large ribosomal subunit protein eL14, found in Trypanosoma brucei brucei.